Reading from the N-terminus, the 145-residue chain is Maximins 3/H3 type 2 (145 aa).

Positions 1–18 (MNFKYIVAVSFLIASAYA) are cleaved as a signal peptide. 2 consecutive propeptides follow at residues 19–43 (RSVQ…LREI) and 74–124 (RTAE…KEKR). At Ile144 the chain carries Isoleucine amide.

It belongs to the bombinin family. In terms of tissue distribution, expressed by the skin glands.

The protein resides in the secreted. In terms of biological role, maximin-3 shows antibacterial activity against both Gram-positive and Gram-negative bacteria. It also shows antimicrobial activity against the fungus C.albicans, but not against A.flavus nor P.uticale. It has little hemolytic activity. It possess a significant cytotoxicity against tumor cell lines. It possess a significant anti-HIV activity. It shows high spermicidal activity. Functionally, maximin-H3 shows antibacterial activity against both Gram-positive and Gram-negative bacteria. It also shows antimicrobial activity against the fungus C.albicans. Shows strong hemolytic activity. This is Maximins 3/H3 type 2 from Bombina maxima (Giant fire-bellied toad).